The sequence spans 227 residues: Cytochrome c oxidase subunit 2 (227 aa).

At 1-14 the chain is on the mitochondrial intermembrane side; the sequence is MAYPFELGFQDATS. Residues 15 to 45 traverse the membrane as a helical segment; that stretch reads PIMEELLHFHDHTLMIVFLISSLVLYIISLM. At 46–59 the chain is on the mitochondrial matrix side; it reads LTTKLTHTSTMDAQ. Residues 60 to 87 traverse the membrane as a helical segment; the sequence is EVETIWTILPAIILILIALPSLRILYMM. Residues 88 to 227 lie on the Mitochondrial intermembrane side of the membrane; the sequence is DEINDPSLTV…HFENWSSSML (140 aa). 6 residues coordinate Cu cation: H161, C196, E198, C200, H204, and M207. A Mg(2+)-binding site is contributed by E198.

It belongs to the cytochrome c oxidase subunit 2 family. As to quaternary structure, component of the cytochrome c oxidase (complex IV, CIV), a multisubunit enzyme composed of 14 subunits. The complex is composed of a catalytic core of 3 subunits MT-CO1, MT-CO2 and MT-CO3, encoded in the mitochondrial DNA, and 11 supernumerary subunits COX4I, COX5A, COX5B, COX6A, COX6B, COX6C, COX7A, COX7B, COX7C, COX8 and NDUFA4, which are encoded in the nuclear genome. The complex exists as a monomer or a dimer and forms supercomplexes (SCs) in the inner mitochondrial membrane with NADH-ubiquinone oxidoreductase (complex I, CI) and ubiquinol-cytochrome c oxidoreductase (cytochrome b-c1 complex, complex III, CIII), resulting in different assemblies (supercomplex SCI(1)III(2)IV(1) and megacomplex MCI(2)III(2)IV(2)). Found in a complex with TMEM177, COA6, COX18, COX20, SCO1 and SCO2. Interacts with TMEM177 in a COX20-dependent manner. Interacts with COX20. Interacts with COX16. Cu cation is required as a cofactor.

The protein localises to the mitochondrion inner membrane. It carries out the reaction 4 Fe(II)-[cytochrome c] + O2 + 8 H(+)(in) = 4 Fe(III)-[cytochrome c] + 2 H2O + 4 H(+)(out). Component of the cytochrome c oxidase, the last enzyme in the mitochondrial electron transport chain which drives oxidative phosphorylation. The respiratory chain contains 3 multisubunit complexes succinate dehydrogenase (complex II, CII), ubiquinol-cytochrome c oxidoreductase (cytochrome b-c1 complex, complex III, CIII) and cytochrome c oxidase (complex IV, CIV), that cooperate to transfer electrons derived from NADH and succinate to molecular oxygen, creating an electrochemical gradient over the inner membrane that drives transmembrane transport and the ATP synthase. Cytochrome c oxidase is the component of the respiratory chain that catalyzes the reduction of oxygen to water. Electrons originating from reduced cytochrome c in the intermembrane space (IMS) are transferred via the dinuclear copper A center (CU(A)) of subunit 2 and heme A of subunit 1 to the active site in subunit 1, a binuclear center (BNC) formed by heme A3 and copper B (CU(B)). The BNC reduces molecular oxygen to 2 water molecules using 4 electrons from cytochrome c in the IMS and 4 protons from the mitochondrial matrix. The protein is Cytochrome c oxidase subunit 2 (MT-CO2) of Neotamias bulleri (Buller's chipmunk).